Here is a 341-residue protein sequence, read N- to C-terminus: Glyceraldehyde-3-phosphate dehydrogenase 2 (341 aa).

NAD(+) contacts are provided by residues 13-14 (RI), D35, and R85. Residues 157–159 (SCT), T188, 217–218 (TG), and R240 contribute to the D-glyceraldehyde 3-phosphate site. Catalysis depends on C158, which acts as the Nucleophile. N322 lines the NAD(+) pocket.

The protein belongs to the glyceraldehyde-3-phosphate dehydrogenase family. Homotetramer.

It is found in the cytoplasm. The catalysed reaction is D-glyceraldehyde 3-phosphate + phosphate + NAD(+) = (2R)-3-phospho-glyceroyl phosphate + NADH + H(+). The protein operates within carbohydrate degradation; glycolysis; pyruvate from D-glyceraldehyde 3-phosphate: step 1/5. This chain is Glyceraldehyde-3-phosphate dehydrogenase 2 (gpd-2), found in Caenorhabditis elegans.